The sequence spans 368 residues: 3-dehydroquinate synthase (368 aa).

NAD(+)-binding positions include 99–103 (GVVGD), 123–124 (TT), lysine 136, and lysine 145. Residues glutamate 178, histidine 242, and histidine 259 each coordinate Zn(2+).

The protein belongs to the sugar phosphate cyclases superfamily. Dehydroquinate synthase family. NAD(+) serves as cofactor. The cofactor is Co(2+). Requires Zn(2+) as cofactor.

It localises to the cytoplasm. The enzyme catalyses 7-phospho-2-dehydro-3-deoxy-D-arabino-heptonate = 3-dehydroquinate + phosphate. It functions in the pathway metabolic intermediate biosynthesis; chorismate biosynthesis; chorismate from D-erythrose 4-phosphate and phosphoenolpyruvate: step 2/7. In terms of biological role, catalyzes the conversion of 3-deoxy-D-arabino-heptulosonate 7-phosphate (DAHP) to dehydroquinate (DHQ). This is 3-dehydroquinate synthase from Chlorobaculum tepidum (strain ATCC 49652 / DSM 12025 / NBRC 103806 / TLS) (Chlorobium tepidum).